The following is a 130-amino-acid chain: Protein ApaG (130 aa).

The 125-residue stretch at 3–127 (KAETRGIMVT…FSLDSPHLRR (125 aa)) folds into the ApaG domain.

The chain is Protein ApaG from Methylorubrum extorquens (strain CM4 / NCIMB 13688) (Methylobacterium extorquens).